A 970-amino-acid chain; its full sequence is Serine/threonine-protein kinase PLK4 (970 aa).

Residues phenylalanine 12–methionine 265 form the Protein kinase domain. ATP contacts are provided by residues leucine 18 to valine 26 and lysine 41. An N6-acetyllysine mark is found at lysine 45 and lysine 46. The Proton acceptor role is filled by aspartate 136. A disordered region spans residues valine 324–leucine 373. The segment covering lysine 327–phenylalanine 343 has biased composition (low complexity). Over residues tyrosine 344–glycine 356 the composition is skewed to polar residues. Positions valine 360–histidine 369 are enriched in basic and acidic residues. Position 401 is a phosphoserine (serine 401). The disordered stretch occupies residues isoleucine 498–proline 540. Residues phenylalanine 504–serine 515 show a composition bias toward basic and acidic residues. Residues alanine 530–proline 540 are compositionally biased toward polar residues. The Cryptic POLO box 1 (CPB1) domain maps to threonine 586–lysine 699. Serine 665 carries the post-translational modification Phosphoserine. The Cryptic POLO box 2 (CPB2) domain occupies serine 700–proline 813. Residues glycine 808–arginine 829 are disordered. Position 817 is a phosphoserine (serine 817). The 79-residue stretch at glutamine 886–asparagine 964 folds into the POLO box domain.

It belongs to the protein kinase superfamily. Ser/Thr protein kinase family. CDC5/Polo subfamily. As to quaternary structure, homodimer. Interacts with CEP152 (via N-terminus). Interacts with CEP78; this interaction may be important for proper PLK4 localization to the centriole and PLK4-induced overduplication of centrioles. Interacts with CEP131. Interacts simultaneously with TENT5C and CEP192. Interacts with TENT5C; this interaction leads to the TENT5C recruitment in the centrosome. Interacts with CEP85; this interaction may be important in cell migration and centriole assembly. In terms of processing, ubiquitinated; leading to its degradation by the proteasome. Deubiquitinated by USP54; leading to PLK4 stabilization. Post-translationally, tyrosine-phosphorylated by TEC. Acetylation by KAT2A and KAT2B impairs kinase activity by shifting the kinase to an inactive conformation.

The protein resides in the cytoplasm. Its subcellular location is the cytoskeleton. The protein localises to the microtubule organizing center. It is found in the centrosome. It localises to the centriole. The protein resides in the nucleus. Its subcellular location is the nucleolus. The protein localises to the cleavage furrow. It catalyses the reaction L-seryl-[protein] + ATP = O-phospho-L-seryl-[protein] + ADP + H(+). The catalysed reaction is L-threonyl-[protein] + ATP = O-phospho-L-threonyl-[protein] + ADP + H(+). Its function is as follows. Serine/threonine-protein kinase that plays a central role in centriole duplication. Able to trigger procentriole formation on the surface of the parental centriole cylinder, leading to the recruitment of centriole biogenesis proteins such as SASS6, CPAP, CCP110, CEP135 and gamma-tubulin. When overexpressed, it is able to induce centrosome amplification through the simultaneous generation of multiple procentrioles adjoining each parental centriole during S phase. Phosphorylates 'Ser-151' of FBXW5 during the G1/S transition, leading to inhibit FBXW5 ability to ubiquitinate SASS6. Its central role in centriole replication suggests a possible role in tumorigenesis, centrosome aberrations being frequently observed in tumors. Also involved in deuterosome-mediated centriole amplification in multiciliated that can generate more than 100 centrioles. Also involved in trophoblast differentiation by phosphorylating HAND1, leading to disrupt the interaction between HAND1 and MDFIC and activate HAND1. Phosphorylates CDC25C and CHEK2. Required for the recruitment of STIL to the centriole and for STIL-mediated centriole amplification. Phosphorylates CEP131 and PCM1 which is essential for proper organization and integrity of centriolar satellites. This chain is Serine/threonine-protein kinase PLK4, found in Pongo abelii (Sumatran orangutan).